A 151-amino-acid polypeptide reads, in one-letter code: Large ribosomal subunit protein bL9 (151 aa).

This sequence belongs to the bacterial ribosomal protein bL9 family.

Binds to the 23S rRNA. The protein is Large ribosomal subunit protein bL9 of Chlorobium luteolum (strain DSM 273 / BCRC 81028 / 2530) (Pelodictyon luteolum).